The primary structure comprises 421 residues: MMENIMKKRLLSTSISTLLLGLSVMPAFADEDVTAWRLFIADHDKPVVNVIDALDGDKLATFNVKGPANLSRSESGATIFAIQGSAGVVSTIASGIAFHDHGDHADIDIDAPKLLPLELTGKKPGHFVERQGKIAQWFDGEDSAQILGESAVLKGQKNITKVNVVAPHHGVAVPYDNYAVVSIPNPDDASKRPVGARVVDLQGKKVGDDALCPGLHGSAGSGDTFALSCETGLLLITQKNAAPVIRHLPYAKTLPEGSTSTLIGGKGMQYFIGNYGPDRIILVDPTESDSFRLIQLPTRRVHFVVDPVRAKFAYVFTEDGKLNQIDVLKGEISQSVRVTDPYSMDGHWNDPRPRIAVADNKIYVTDPLKSKIIVLDATSFKKTSEISVEGQPFNIVAVGGSGKVHGEHHDHEAHHHDDHAH.

An N-terminal signal peptide occupies residues M1–A29. Residues H101, H104, D106, H126, H169, H216, and H405 each coordinate Zn(2+). A disulfide bridge links C212 with C229. Residues G399–H421 are disordered. Residues V404–H421 are compositionally biased toward basic and acidic residues. Positions H408 to H419 match the N-terminal Zn(2+)-binding motif; binds a third Zn(2+) with low affinity motif.

In terms of assembly, monomer.

It localises to the periplasm. Its function is as follows. Acts as a zinc chaperone in the AztABCD zinc transport system. Directly transfers one zinc cation to the solute binding protein AztC; the transfer occurs without the formation of a stable interaction. Binds 3 Zn(2+), two with high affinity and one with low affinity, and transfers only Zn(2+) bound to site 2 to AztC. The sequence is that of Zinc chaperone AztD from Citrobacter koseri (strain ATCC BAA-895 / CDC 4225-83 / SGSC4696).